The primary structure comprises 212 residues: Lipopolysaccharide core heptose(II)-phosphate phosphatase (212 aa).

The first 32 residues, 1-32 (MSIGGVYELAFCRSSLKSKKYFIILLALAAIA), serve as a signal peptide directing secretion.

The protein belongs to the phosphoglycerate mutase family. Ais subfamily.

It is found in the periplasm. It functions in the pathway bacterial outer membrane biogenesis; lipopolysaccharide metabolism. Functionally, catalyzes the dephosphorylation of heptose(II) of the outer membrane lipopolysaccharide core. This Shigella boydii serotype 4 (strain Sb227) protein is Lipopolysaccharide core heptose(II)-phosphate phosphatase.